The following is a 227-amino-acid chain: Cytochrome c oxidase subunit 2 (227 aa).

Residues 1 to 14 (MAYPFQLGLQDATS) are Mitochondrial intermembrane-facing. The helical transmembrane segment at 15-45 (PIMEELANFHDHTLMIVFLISSLVLYIISSM) threads the bilayer. Residues 46 to 59 (LTTKLTHTSTMDAQ) are Mitochondrial matrix-facing. Residues 60-87 (EVETIWTILPAVILILIALPSLRILYMM) traverse the membrane as a helical segment. Residues 88–227 (DEINNPALTV…HFENWSASMI (140 aa)) lie on the Mitochondrial intermembrane side of the membrane. Cu cation-binding residues include H161, C196, E198, C200, H204, and M207. A Mg(2+)-binding site is contributed by E198.

Belongs to the cytochrome c oxidase subunit 2 family. In terms of assembly, component of the cytochrome c oxidase (complex IV, CIV), a multisubunit enzyme composed of 14 subunits. The complex is composed of a catalytic core of 3 subunits MT-CO1, MT-CO2 and MT-CO3, encoded in the mitochondrial DNA, and 11 supernumerary subunits COX4I, COX5A, COX5B, COX6A, COX6B, COX6C, COX7A, COX7B, COX7C, COX8 and NDUFA4, which are encoded in the nuclear genome. The complex exists as a monomer or a dimer and forms supercomplexes (SCs) in the inner mitochondrial membrane with NADH-ubiquinone oxidoreductase (complex I, CI) and ubiquinol-cytochrome c oxidoreductase (cytochrome b-c1 complex, complex III, CIII), resulting in different assemblies (supercomplex SCI(1)III(2)IV(1) and megacomplex MCI(2)III(2)IV(2)). Found in a complex with TMEM177, COA6, COX18, COX20, SCO1 and SCO2. Interacts with TMEM177 in a COX20-dependent manner. Interacts with COX20. Interacts with COX16. The cofactor is Cu cation.

The protein resides in the mitochondrion inner membrane. The catalysed reaction is 4 Fe(II)-[cytochrome c] + O2 + 8 H(+)(in) = 4 Fe(III)-[cytochrome c] + 2 H2O + 4 H(+)(out). Component of the cytochrome c oxidase, the last enzyme in the mitochondrial electron transport chain which drives oxidative phosphorylation. The respiratory chain contains 3 multisubunit complexes succinate dehydrogenase (complex II, CII), ubiquinol-cytochrome c oxidoreductase (cytochrome b-c1 complex, complex III, CIII) and cytochrome c oxidase (complex IV, CIV), that cooperate to transfer electrons derived from NADH and succinate to molecular oxygen, creating an electrochemical gradient over the inner membrane that drives transmembrane transport and the ATP synthase. Cytochrome c oxidase is the component of the respiratory chain that catalyzes the reduction of oxygen to water. Electrons originating from reduced cytochrome c in the intermembrane space (IMS) are transferred via the dinuclear copper A center (CU(A)) of subunit 2 and heme A of subunit 1 to the active site in subunit 1, a binuclear center (BNC) formed by heme A3 and copper B (CU(B)). The BNC reduces molecular oxygen to 2 water molecules using 4 electrons from cytochrome c in the IMS and 4 protons from the mitochondrial matrix. The protein is Cytochrome c oxidase subunit 2 (MT-CO2) of Malacomys longipes (Big-eared swamp rat).